The sequence spans 1680 residues: Sodium channel protein type 7 subunit alpha (1680 aa).

Residues 1–117 are Cytoplasmic-facing; it reads MLTSPEPKGL…RRAVIKVLVH (117 aa). The I repeat unit spans residues 100-401; sequence TLSPLSSLRR…ILTMAYEQEK (302 aa). The chain crosses the membrane as a helical span at residues 118 to 137; the sequence is PLFRLLILISVLTDSILMCM. Residues 138–141 are Extracellular-facing; the sequence is SNLP. A helical transmembrane segment spans residues 142 to 167; the sequence is EWILAVENTLLGIYTFEILVKVIARG. Residues 168 to 178 lie on the Cytoplasmic side of the membrane; the sequence is IWAGSFSFLGD. Residues 179–196 form a helical membrane-spanning segment; it reads LWNWLDFSVTLFELITRS. Over 197 to 200 the chain is Extracellular; the sequence is SPLS. The helical transmembrane segment at 201–219 threads the bilayer; the sequence is SLPMFKTIRTLRILKIIPL. The Cytoplasmic segment spans residues 220-237; it reads NHGLQSIVVTLVQCLKKL. A helical transmembrane segment spans residues 238–259; it reads LGAIALALFFLTVSSLFGMGLF. At 260–338 the chain is on the extracellular side; the sequence is MGNLKHKCVR…PDNGFTSFDN (79 aa). Cysteine 267 and cysteine 307 are disulfide-bonded. Residues asparagine 281 and asparagine 309 are each glycosylated (N-linked (GlcNAc...) asparagine). An intramembrane region (pore-forming) is located at residues 339 to 366; that stretch reads FGWALLAMFRLMTQDYPELLYHQILYAS. Glycine 367 is a topological domain (extracellular). Residues 368–407 form a helical membrane-spanning segment; that stretch reads KIYMIFFVLISFWFAFYMASLFLGILTMAYEQEKQRASEE. At 408 to 505 the chain is on the cytoplasmic side; it reads SRDMDSKCHQ…EFADRIITHP (98 aa). The stretch at 487–756 is one II repeat; the sequence is CSPCWIKLNE…QLAVAWIKMV (270 aa). The chain crosses the membrane as a helical span at residues 506-521; that stretch reads LFDLFLVICIILNICF. Over 522-530 the chain is Extracellular; the sequence is LALEHFPMS. Residues 531-559 traverse the membrane as a helical segment; sequence EELMSLLAIGNLVFIGIYTIEMILKIIAM. Over 560-568 the chain is Cytoplasmic; sequence HPYGYFQIS. The chain crosses the membrane as a helical span at residues 569 to 586; it reads WHIFDSILVVLGLTEMLL. Residues 587–592 lie on the Extracellular side of the membrane; it reads ADIEEI. A helical membrane pass occupies residues 593 to 608; the sequence is TVFILVPLIFIKLGKY. Over 609-625 the chain is Cytoplasmic; sequence APPFKNLMRILGRALVA. A helical transmembrane segment spans residues 626–654; sequence LKDLVLLVSIFIYFSAVFGMKLFGRSYKD. Residues 655–672 lie on the Extracellular side of the membrane; it reads CVCHVDQDCQRQRWHMSD. Intrachain disulfides connect cysteine 657–cysteine 663 and cysteine 695–cysteine 704. Residues 673 to 699 constitute an intramembrane region (pore-forming); that stretch reads FLHAYVTVFRILCGEWIETLWECMEVA. Residue glycine 700 is a topological domain, extracellular. Residues 701-731 traverse the membrane as a helical segment; that stretch reads EAWCIPFYMMVILIGNLLILYLFVALVSSFA. Residues 732–933 lie on the Cytoplasmic side of the membrane; that stretch reads SYDATTEVSK…KTCCKIVENS (202 aa). Residues 807–833 show a composition bias toward polar residues; it reads DQSSGTEKTPVTESESQSLIASPSVSE. The tract at residues 807–874 is disordered; it reads DQSSGTEKTP…MKQSSSSECS (68 aa). Position 842 is a phosphoserine (serine 842). One copy of the III repeat lies at 915–1223; the sequence is NGKIWRNIRK…KKQYRALKKL (309 aa). The chain crosses the membrane as a helical span at residues 934-952; the sequence is WFECFIGLVTLLCTGTLAL. Over 953 to 960 the chain is Extracellular; the sequence is EDIYIDQR. A helical transmembrane segment spans residues 961-989; it reads KTIKIFLEYGDMIFAYIFILEMLLKWVAY. At 990 to 997 the chain is on the cytoplasmic side; sequence GFKAYFSN. A helical transmembrane segment spans residues 998–1019; the sequence is NWYKLDFMVVIVLCLSLIGKTR. Residue glutamate 1020 is a topological domain, extracellular. Residues 1021–1039 form a helical membrane-spanning segment; it reads DLNPLASIKFLRALRVLSQ. Over 1040 to 1054 the chain is Cytoplasmic; the sequence is FERMKVVLRALIKTT. A helical transmembrane segment spans residues 1055–1079; sequence LPAVSVFLVCLMIWLLFSVMGVFLF. Residues 1080 to 1126 lie on the Extracellular side of the membrane; it reads AGKFYECIDPTRGERFSVFEVMNKSQCENLVFNESMPWENAKLNFDN. An intrachain disulfide couples cysteine 1086 to cysteine 1106. N-linked (GlcNAc...) asparagine glycosylation is found at asparagine 1102 and asparagine 1112. The segment at residues 1127–1153 is an intramembrane region (pore-forming); sequence VGNGFLSLFQVATFNGWISIMNSAIDS. Residues 1154 to 1166 lie on the Extracellular side of the membrane; sequence VGVYMQPSFEHSL. A helical transmembrane segment spans residues 1167–1201; sequence HMYTYFIIFVVFGLFLPLCMLIGVIIRNFNKQKIK. Residues 1202–1249 are Cytoplasmic-facing; sequence QGGSNIFITVKQKKQYRALKKLLYADSQKPAARPRNKFQGFICDVVTH. One copy of the IV repeat lies at 1232-1530; that stretch reads AARPRNKFQG…WNRFDPDRTQ (299 aa). A helical transmembrane segment spans residues 1250–1271; that stretch reads RVFNVIIILLICFQATTIMIQN. The Extracellular portion of the chain corresponds to 1272–1275; sequence DEQS. Residues 1276 to 1304 traverse the membrane as a helical segment; sequence PQIETAVFWMNSLFTMLFTLECILKLTAF. Topologically, residues 1305–1311 are cytoplasmic; it reads RCHYFTS. The helical transmembrane segment at 1312–1337 threads the bilayer; it reads AWNVHDFMVVVFSITGLLLPLSIGQY. At 1338 to 1340 the chain is on the extracellular side; that stretch reads FVP. Residues 1341–1361 traverse the membrane as a helical segment; the sequence is PSLVQLLLLSRIIHVLRPGKG. The Cytoplasmic portion of the chain corresponds to 1362-1376; sequence PKVFHDLMLPLMLSL. A helical membrane pass occupies residues 1377-1401; it reads PALLNIALLIFLVMFIYAIFGMYNF. At 1402–1419 the chain is on the extracellular side; that stretch reads AYVKKEAGINDVSNFETF. The pore-forming intramembrane region spans 1420-1443; sequence GSSMLCLFQVTTFSGWDGMLDAIF. Over 1444–1467 the chain is Extracellular; the sequence is NSQWSDCDPDKINPGTQVRGDCGS. The cysteines at positions 1450 and 1465 are disulfide-linked. The helical transmembrane segment at 1468–1503 threads the bilayer; the sequence is PSVGIFYFVSYILISWLIIVNMYVVLIMEFLSIPSK. The Cytoplasmic segment spans residues 1504-1680; the sequence is RKNRTLSEDD…EEKASIQTQI (177 aa). Positions 1646–1680 are disordered; the sequence is KIQDIPEIDDGREDPNSKGVHSGQIEEKASIQTQI.

This sequence belongs to the sodium channel (TC 1.A.1.10) family. SCN7A subfamily. In terms of assembly, the sodium channel formed by SCN7A is probably a heterooligomeric complex consisting of the ion conducting pore forming alpha subunit SCN7A and regulatory beta subunits such as SCN3B. Interacts with ATP1A1; activates ATP1A1 and thereby indirectly signals to nearby neurons to regulate sodium homeostasis. In terms of tissue distribution, not tissue specific but widely expressed.

It localises to the cell membrane. It catalyses the reaction Na(+)(in) = Na(+)(out). In terms of biological role, sodium leak channel functioning as an osmosensor regulating sodium ion levels in various tissues and organs. While most sodium channels are voltage-gated, SCN7A is not and lets sodium flow through membrane along its concentration gradient. In glial cells of the central nervous system, senses body-fluid sodium levels and controls salt intake behavior as well as voluntary water intake through activation of nearby neurons to maintain appropriate sodium levels in the body. By mediating sodium influx into keratinocytes, also plays a role in skin barrier homeostasis. The sequence is that of Sodium channel protein type 7 subunit alpha from Rattus norvegicus (Rat).